Consider the following 363-residue polypeptide: Flagellar P-ring protein 2 (363 aa).

A signal peptide spans 1–20 (MKRIVLLLMSVALFSTAAQA).

The protein belongs to the FlgI family. In terms of assembly, the basal body constitutes a major portion of the flagellar organelle and consists of four rings (L,P,S, and M) mounted on a central rod.

Its subcellular location is the periplasm. It localises to the bacterial flagellum basal body. Its function is as follows. Assembles around the rod to form the L-ring and probably protects the motor/basal body from shearing forces during rotation. This is Flagellar P-ring protein 2 (flgI2) from Vibrio parahaemolyticus serotype O3:K6 (strain RIMD 2210633).